A 351-amino-acid chain; its full sequence is c-di-GMP synthase (351 aa).

This sequence belongs to the CD-NTase family. E05 subfamily.

It catalyses the reaction 2 GTP = 3',3'-c-di-GMP + 2 diphosphate. Cyclic nucleotide synthase (second messenger synthase) of a CBASS antivirus system. CBASS (cyclic oligonucleotide-based antiphage signaling system) provides immunity against bacteriophage. The CD-NTase protein synthesizes cyclic nucleotides in response to infection; these serve as specific second messenger signals. The signals activate a diverse range of effectors, leading to bacterial cell death and thus abortive phage infection. A type I-D(GG) CBASS system. In terms of biological role, cyclic dinucleotide synthase that catalyzes the synthesis of c-di-GMP, has no activity with other NTP substrates. The polypeptide is c-di-GMP synthase (cdnE) (Capnocytophaga granulosa (strain ATCC 51502 / DSM 11449 / JCM 8566 / LMG 16022 / NCTC 12948 / B0611)).